The chain runs to 379 residues: Putative clathrin assembly protein At1g68110 (379 aa).

The region spanning 26–158 (NSSYRNADLE…SFLSDQIHRL (133 aa)) is the ENTH domain.

The protein localises to the membrane. It is found in the clathrin-coated pit. It localises to the golgi apparatus. Its subcellular location is the cytoplasmic vesicle. The protein resides in the clathrin-coated vesicle. The sequence is that of Putative clathrin assembly protein At1g68110 from Arabidopsis thaliana (Mouse-ear cress).